The following is a 253-amino-acid chain: Vitamin B12 import ATP-binding protein BtuD (253 aa).

An ABC transporter domain is found at 3–237 (LDAKNLAMPP…EQLESTFATQ (235 aa)). Position 31-38 (31-38 (GPNGSGKS)) interacts with ATP.

This sequence belongs to the ABC transporter superfamily. Vitamin B12 importer (TC 3.A.1.13.1) family. The complex is composed of two ATP-binding proteins (BtuD), two transmembrane proteins (BtuC) and a solute-binding protein (BtuF).

The protein resides in the cell inner membrane. It catalyses the reaction an R-cob(III)alamin(out) + ATP + H2O = an R-cob(III)alamin(in) + ADP + phosphate + H(+). In terms of biological role, part of the ABC transporter complex BtuCDF involved in vitamin B12 import. Responsible for energy coupling to the transport system. This Photobacterium profundum (strain SS9) protein is Vitamin B12 import ATP-binding protein BtuD.